Here is a 757-residue protein sequence, read N- to C-terminus: Lysyl oxidase homolog 4 (757 aa).

A signal peptide spans 1–25 (MWFLPAALPLLPLLLLLGQAPPSRP). 4 SRCR domains span residues 33-134 (LRLV…VVCN), 160-288 (VRLK…VSCV), 312-412 (VRLR…VRCN), and 422-530 (VRLA…VSCT). 17 disulfide bridges follow: C59–C123, C72–C133, C103–C113, C192–C277, C205–C287, C252–C262, C337–C401, C350–C411, C381–C391, C451–C516, C464–C529, C498–C508, C559–C565, C611–C659, C643–C649, C671–C681, and C718–C732. N-linked (GlcNAc...) asparagine glycosylation is present at N199. Positions 534–737 (PDLVMNAQLV…WLHNCHTGDS (204 aa)) are lysyl-oxidase like. H612, H614, and H616 together coordinate Cu cation. N630 carries an N-linked (GlcNAc...) asparagine glycan. The lysine tyrosylquinone (Lys-Tyr) cross-link spans 639-675 (KASFCLEDTNCPTGMQRRYACANFGEQGVTVGCWDTY). 2',4',5'-topaquinone is present on Y675.

It belongs to the lysyl oxidase family. Cu cation serves as cofactor. Lysine tyrosylquinone residue is required as a cofactor. The lysine tyrosylquinone cross-link (LTQ) is generated by condensation of the epsilon-amino group of a lysine with a topaquinone produced by oxidation of tyrosine. In terms of processing, may be proteolytically cleaved by BMP1.

It localises to the secreted. The protein localises to the extracellular space. The catalysed reaction is L-lysyl-[protein] + O2 + H2O = (S)-2-amino-6-oxohexanoyl-[protein] + H2O2 + NH4(+). In terms of biological role, catalyzes the oxidative deamination of lysine and hydroxylysine residues in collagen and elastin, resulting in the formation of covalent cross-linkages, and the stabilization of collagen and elastin fibers. This is Lysyl oxidase homolog 4 (LOXL4) from Bos taurus (Bovine).